The sequence spans 446 residues: ATP-dependent protease ATPase subunit HslU (446 aa).

Residues Ile-17, 59–64, Asp-255, Glu-320, and Arg-392 each bind ATP; that span reads GVGKTE.

Belongs to the ClpX chaperone family. HslU subfamily. A double ring-shaped homohexamer of HslV is capped on each side by a ring-shaped HslU homohexamer. The assembly of the HslU/HslV complex is dependent on binding of ATP.

The protein localises to the cytoplasm. Functionally, ATPase subunit of a proteasome-like degradation complex; this subunit has chaperone activity. The binding of ATP and its subsequent hydrolysis by HslU are essential for unfolding of protein substrates subsequently hydrolyzed by HslV. HslU recognizes the N-terminal part of its protein substrates and unfolds these before they are guided to HslV for hydrolysis. The protein is ATP-dependent protease ATPase subunit HslU of Pseudomonas fluorescens (strain ATCC BAA-477 / NRRL B-23932 / Pf-5).